The primary structure comprises 502 residues: Maturase K (502 aa).

The protein belongs to the intron maturase 2 family. MatK subfamily.

The protein localises to the plastid. Its subcellular location is the chloroplast. Its function is as follows. Usually encoded in the trnK tRNA gene intron. Probably assists in splicing its own and other chloroplast group II introns. The sequence is that of Maturase K from Fremontodendron californicum (California flannelbush).